Consider the following 170-residue polypeptide: Lipoprotein signal peptidase (170 aa).

Transmembrane regions (helical) follow at residues 12–32, 67–87, and 94–113; these read WYWIVVLVFIADQLSKQWVLS, WQRWLFTFVAVGFSILLSVWL, and MWRLNLAYTLVIGGALGNLI. Residues D123 and D141 contribute to the active site. The helical transmembrane segment at 133 to 153 threads the bilayer; the sequence is HFPAFNIADSAICIGAGLIIL.

This sequence belongs to the peptidase A8 family.

It is found in the cell inner membrane. It carries out the reaction Release of signal peptides from bacterial membrane prolipoproteins. Hydrolyzes -Xaa-Yaa-Zaa-|-(S,diacylglyceryl)Cys-, in which Xaa is hydrophobic (preferably Leu), and Yaa (Ala or Ser) and Zaa (Gly or Ala) have small, neutral side chains.. Its pathway is protein modification; lipoprotein biosynthesis (signal peptide cleavage). This protein specifically catalyzes the removal of signal peptides from prolipoproteins. The polypeptide is Lipoprotein signal peptidase (Shewanella piezotolerans (strain WP3 / JCM 13877)).